Here is a 92-residue protein sequence, read N- to C-terminus: Large ribosomal subunit protein eL43 (92 aa).

The segment at 39–60 adopts a C4-type zinc-finger fold; sequence CSFCGKDSMKRAVVGIWSCKRC.

It belongs to the eukaryotic ribosomal protein eL43 family.

This chain is Large ribosomal subunit protein eL43 (RpL37A), found in Drosophila melanogaster (Fruit fly).